We begin with the raw amino-acid sequence, 227 residues long: Glutathione S-transferase U7 (227 aa).

Positions 8-87 constitute a GST N-terminal domain; it reads EEVKLLGMWA…YIDETWRDNP (80 aa). Glutathione contacts are provided by residues 18 to 19, 44 to 45, 58 to 59, and 71 to 72; these read SP, NK, MI, and ES. The GST C-terminal domain occupies 92–215; sequence DPYERTMARF…PPEDEHLKYI (124 aa).

The protein belongs to the GST superfamily. Tau family.

It localises to the cytoplasm. The protein resides in the cytosol. It catalyses the reaction RX + glutathione = an S-substituted glutathione + a halide anion + H(+). Its function is as follows. May be involved in the conjugation of reduced glutathione to a wide number of exogenous and endogenous hydrophobic electrophiles and have a detoxification role against certain herbicides. The sequence is that of Glutathione S-transferase U7 (GSTU7) from Arabidopsis thaliana (Mouse-ear cress).